Reading from the N-terminus, the 623-residue chain is ATP-dependent lipid A-core flippase (623 aa).

5 helical membrane-spanning segments follow: residues 66 to 86 (LVLA…LAVI), 103 to 123 (VWFL…CNFF), 190 to 210 (LVVI…TLII), 290 to 310 (LTPL…AVAL), and 317 to 337 (ALTV…FDPI). Residues 67-349 (VLAVLLMAGA…LTNLAGKMQK (283 aa)) form the ABC transmembrane type-1 domain. The region spanning 382–618 (VEFRAVSHRF…NGLYASLYNM (237 aa)) is the ABC transporter domain. ATP is bound at residue 416–423 (GRSGSGKT).

It belongs to the ABC transporter superfamily. Lipid exporter (TC 3.A.1.106) family. Homodimer.

Its subcellular location is the cell inner membrane. The enzyme catalyses ATP + H2O + lipid A-core oligosaccharideSide 1 = ADP + phosphate + lipid A-core oligosaccharideSide 2.. Involved in lipopolysaccharide (LPS) biosynthesis. Translocates lipid A-core from the inner to the outer leaflet of the inner membrane. Transmembrane domains (TMD) form a pore in the inner membrane and the ATP-binding domain (NBD) is responsible for energy generation. The protein is ATP-dependent lipid A-core flippase of Bordetella bronchiseptica (strain ATCC BAA-588 / NCTC 13252 / RB50) (Alcaligenes bronchisepticus).